Here is a 569-residue protein sequence, read N- to C-terminus: Glutamate--tRNA ligase, chloroplastic/mitochondrial (569 aa).

59–61 provides a ligand contact to L-glutamate; sequence RFA. Residues 62-72 carry the 'HIGH' region motif; it reads PSPTGNLHVGG. Residue His-69 participates in ATP binding. Residues Glu-95, 247–251, and Arg-265 contribute to the L-glutamate site; that span reads YNFCV. ATP-binding positions include Glu-268 and 303–307; that span reads KLSKR. Positions 303 to 307 match the 'KMSKS' region motif; sequence KLSKR.

It belongs to the class-I aminoacyl-tRNA synthetase family. Glutamate--tRNA ligase type 1 subfamily.

The protein resides in the plastid. Its subcellular location is the chloroplast. It is found in the mitochondrion. It carries out the reaction tRNA(Glu) + L-glutamate + ATP = L-glutamyl-tRNA(Glu) + AMP + diphosphate. Functionally, catalyzes the attachment of glutamate to tRNA(Glu) in a two-step reaction: glutamate is first activated by ATP to form Glu-AMP and then transferred to the acceptor end of tRNA(Glu). The sequence is that of Glutamate--tRNA ligase, chloroplastic/mitochondrial from Nicotiana tabacum (Common tobacco).